Here is a 73-residue protein sequence, read N- to C-terminus: Small, acid-soluble spore protein C2 (73 aa).

Belongs to the alpha/beta-type SASP family.

In terms of biological role, SASP are bound to spore DNA. They are double-stranded DNA-binding proteins that cause DNA to change to an a-like conformation. They protect the DNA backbone from chemical and enzymatic cleavage and are thus involved in dormant spore's high resistance to UV light. This is Small, acid-soluble spore protein C2 (SASP-C2) from Priestia megaterium (Bacillus megaterium).